The following is a 284-amino-acid chain: 4-diphosphocytidyl-2-C-methyl-D-erythritol kinase (284 aa).

Lys-10 is a catalytic residue. 92-102 provides a ligand contact to ATP; sequence PYGAGLGSGSS. Asp-134 is an active-site residue.

It belongs to the GHMP kinase family. IspE subfamily.

It catalyses the reaction 4-CDP-2-C-methyl-D-erythritol + ATP = 4-CDP-2-C-methyl-D-erythritol 2-phosphate + ADP + H(+). The protein operates within isoprenoid biosynthesis; isopentenyl diphosphate biosynthesis via DXP pathway; isopentenyl diphosphate from 1-deoxy-D-xylulose 5-phosphate: step 3/6. Functionally, catalyzes the phosphorylation of the position 2 hydroxy group of 4-diphosphocytidyl-2C-methyl-D-erythritol. This is 4-diphosphocytidyl-2-C-methyl-D-erythritol kinase from Salinibacter ruber (strain DSM 13855 / M31).